Reading from the N-terminus, the 205-residue chain is Thymidylate kinase (205 aa).

Residue 10–17 (GIDGAGKS) participates in ATP binding.

It belongs to the thymidylate kinase family.

It carries out the reaction dTMP + ATP = dTDP + ADP. Its function is as follows. Phosphorylation of dTMP to form dTDP in both de novo and salvage pathways of dTTP synthesis. In Ralstonia nicotianae (strain ATCC BAA-1114 / GMI1000) (Ralstonia solanacearum), this protein is Thymidylate kinase.